Consider the following 700-residue polypeptide: Ubiquitin carboxyl-terminal hydrolase BAP1 (700 aa).

Residues 4–235 (GWLELESDPG…IRFNLMAVVP (232 aa)) form the UCH catalytic domain. The active-site Nucleophile is Cys91. His169 (proton donor) is an active-site residue. 2 stretches are compositionally biased toward low complexity: residues 273–282 (SQKSQESQSP) and 317–332 (SPPTKSKPVAKASASS). Disordered stretches follow at residues 273 to 346 (SQKS…PIVQ), 363 to 405 (QEEE…NTNS), and 469 to 513 (THSQ…SPVT). Residues 386 to 399 (SDDEDDYDDDEEEE) are compositionally biased toward acidic residues. A coiled-coil region spans residues 598 to 632 (SKEKELLALLKCVEAEIANYEACLKEEVEKRKKFK). The 29-residue stretch at 641–669 (NYDEFICTFISMLAQEGMLASLVEQNISV) folds into the ULD domain. The segment at 674-700 (GVSIGRLHKQRKPDRRKRSRPYKAKRQ) is disordered. The short motif at 688 to 693 (RRKRSR) is the Nuclear localization signal element.

It belongs to the peptidase C12 family. BAP1 subfamily. In terms of assembly, component of the PR-DUB complex.

The protein localises to the cytoplasm. Its subcellular location is the nucleus. It catalyses the reaction Thiol-dependent hydrolysis of ester, thioester, amide, peptide and isopeptide bonds formed by the C-terminal Gly of ubiquitin (a 76-residue protein attached to proteins as an intracellular targeting signal).. Its function is as follows. Deubiquitinating enzyme that plays a key role in chromatin by mediating deubiquitination of histone H2A. Catalytic component of the PR-DUB complex, a complex that specifically mediates deubiquitination of histone H2A monoubiquitinated at 'Lys-119' (H2AK119ub1). This Gallus gallus (Chicken) protein is Ubiquitin carboxyl-terminal hydrolase BAP1 (BAP1).